The primary structure comprises 254 residues: 3-deoxy-manno-octulosonate cytidylyltransferase (254 aa).

Belongs to the KdsB family.

The protein localises to the cytoplasm. The catalysed reaction is 3-deoxy-alpha-D-manno-oct-2-ulosonate + CTP = CMP-3-deoxy-beta-D-manno-octulosonate + diphosphate. It participates in nucleotide-sugar biosynthesis; CMP-3-deoxy-D-manno-octulosonate biosynthesis; CMP-3-deoxy-D-manno-octulosonate from 3-deoxy-D-manno-octulosonate and CTP: step 1/1. It functions in the pathway bacterial outer membrane biogenesis; lipopolysaccharide biosynthesis. Activates KDO (a required 8-carbon sugar) for incorporation into bacterial lipopolysaccharide in Gram-negative bacteria. The chain is 3-deoxy-manno-octulosonate cytidylyltransferase from Pseudomonas aeruginosa (strain ATCC 15692 / DSM 22644 / CIP 104116 / JCM 14847 / LMG 12228 / 1C / PRS 101 / PAO1).